Here is a 483-residue protein sequence, read N- to C-terminus: GTPase Obg (483 aa).

Residues 2 to 159 (SRFIDRVVLH…RDLVLELKSV (158 aa)) enclose the Obg domain. In terms of domain architecture, OBG-type G spans 160-340 (ADVGLLGFPS…LTFALAKMVR (181 aa)). Residues 166–173 (GFPSAGKS), 191–195 (FTTLV), 212–215 (DVPG), 292–295 (NKTD), and 321–323 (SAV) each bind GTP. Mg(2+) contacts are provided by serine 173 and threonine 193. Residues 358 to 438 (PVKVKDSSFT…IGDVSFEWEP (81 aa)) form the OCT domain.

This sequence belongs to the TRAFAC class OBG-HflX-like GTPase superfamily. OBG GTPase family. Monomer. It depends on Mg(2+) as a cofactor.

The protein localises to the cytoplasm. Functionally, an essential GTPase which binds GTP, GDP and possibly (p)ppGpp with moderate affinity, with high nucleotide exchange rates and a fairly low GTP hydrolysis rate. Plays a role in control of the cell cycle, stress response, ribosome biogenesis and in those bacteria that undergo differentiation, in morphogenesis control. The chain is GTPase Obg from Rhodococcus erythropolis (strain PR4 / NBRC 100887).